The following is a 129-amino-acid chain: Glycine cleavage system H protein (129 aa).

One can recognise a Lipoyl-binding domain in the interval 24 to 106 (TYTVGITEHA…YAGGWIFKIK (83 aa)). An N6-lipoyllysine modification is found at K65.

The protein belongs to the GcvH family. The glycine cleavage system is composed of four proteins: P, T, L and H. The cofactor is (R)-lipoate.

Its function is as follows. The glycine cleavage system catalyzes the degradation of glycine. The H protein shuttles the methylamine group of glycine from the P protein to the T protein. This chain is Glycine cleavage system H protein, found in Escherichia coli O45:K1 (strain S88 / ExPEC).